The chain runs to 152 residues: SsrA-binding protein (152 aa).

The protein belongs to the SmpB family.

It localises to the cytoplasm. In terms of biological role, required for rescue of stalled ribosomes mediated by trans-translation. Binds to transfer-messenger RNA (tmRNA), required for stable association of tmRNA with ribosomes. tmRNA and SmpB together mimic tRNA shape, replacing the anticodon stem-loop with SmpB. tmRNA is encoded by the ssrA gene; the 2 termini fold to resemble tRNA(Ala) and it encodes a 'tag peptide', a short internal open reading frame. During trans-translation Ala-aminoacylated tmRNA acts like a tRNA, entering the A-site of stalled ribosomes, displacing the stalled mRNA. The ribosome then switches to translate the ORF on the tmRNA; the nascent peptide is terminated with the 'tag peptide' encoded by the tmRNA and targeted for degradation. The ribosome is freed to recommence translation, which seems to be the essential function of trans-translation. The polypeptide is SsrA-binding protein (Rickettsia montanensis).